The primary structure comprises 97 residues: Small ribosomal subunit protein bS6 (97 aa).

It belongs to the bacterial ribosomal protein bS6 family.

Functionally, binds together with bS18 to 16S ribosomal RNA. This is Small ribosomal subunit protein bS6 (rpsF) from Lactococcus lactis subsp. lactis (strain IL1403) (Streptococcus lactis).